The primary structure comprises 252 residues: Nuclease C1 (252 aa).

The Proton acceptor role is filled by histidine 87. Residue asparagine 119 participates in Mg(2+) binding.

It belongs to the DNA/RNA non-specific endonuclease family. It depends on Mg(2+) as a cofactor. The cofactor is Mn(2+).

It localises to the secreted. This enzyme has both RNase and DNase activity. The sequence is that of Nuclease C1 (NUC1CE) from Cunninghamella echinulata var. echinulata.